The following is a 268-amino-acid chain: Indole-3-glycerol phosphate synthase (268 aa).

Belongs to the TrpC family.

The catalysed reaction is 1-(2-carboxyphenylamino)-1-deoxy-D-ribulose 5-phosphate + H(+) = (1S,2R)-1-C-(indol-3-yl)glycerol 3-phosphate + CO2 + H2O. Its pathway is amino-acid biosynthesis; L-tryptophan biosynthesis; L-tryptophan from chorismate: step 4/5. The protein is Indole-3-glycerol phosphate synthase of Parafrankia sp. (strain EAN1pec).